Consider the following 444-residue polypeptide: Cell division cycle 20.4, cofactor of APC complex (444 aa).

Residues 88–99 (LLSTNHSDSPHQ) are compositionally biased toward polar residues. The interval 88–108 (LLSTNHSDSPHQNPKPVKPRR) is disordered. WD repeat units follow at residues 124-161 (RDDFSLNLLDWGSANVLAIALGDTVYLWDASSGSTSEL), 166-205 (EDKGPVTSINWTQDGLDLAVGLDNSEVQLWDCVSNRQVRT), 209-246 (GHESRVGSLAWDNHILTTGGMDGKIVNNDVRIRSSIVE), 250-289 (GHTEEVCGLKWSESGNKQASGGNDNVVHIWDRSLASSKQT), 298-340 (EHTA…CLNS), 342-383 (ETGS…KMAE), and 386-425 (GHTSRVLFMAQSPNGCTVASAAGDENLRLWNVFGEPPKTT).

It belongs to the WD repeat CDC20/Fizzy family. In terms of assembly, the APC/C is composed of at least 11 subunits that stay tightly associated throughout the cell cycle.

Its subcellular location is the cytoplasm. The protein operates within protein modification; protein ubiquitination. Functionally, component of the anaphase promoting complex/cyclosome (APC/C), a cell cycle-regulated E3 ubiquitin-protein ligase complex that controls progression through mitosis and the G1 phase of the cell cycle. This chain is Cell division cycle 20.4, cofactor of APC complex (CDC20-4), found in Arabidopsis thaliana (Mouse-ear cress).